Consider the following 327-residue polypeptide: Probable cell division protein WhiA (327 aa).

A DNA-binding region (H-T-H motif) is located at residues 275–308; sequence SLEELGRLADPPMTKDAVAGRIRRLLSMADRKAK.

The protein belongs to the WhiA family.

In terms of biological role, involved in cell division and chromosome segregation. This Mycobacterium marinum (strain ATCC BAA-535 / M) protein is Probable cell division protein WhiA.